Consider the following 1374-residue polypeptide: Y' element ATP-dependent helicase YLL066C (1374 aa).

A disordered region spans residues 321–345 (AGEAASSDHDQKISRVTRKRPREPK). Residues 375–552 (EIYMADTPSV…LQRIGLTGLA (178 aa)) form the Helicase ATP-binding domain. 388–395 (APPGYGKT) contributes to the ATP binding site. Positions 498 to 501 (DEFH) match the DEAH box motif. The 150-residue stretch at 609-758 (KLLLALFEIE…EFYGLESKKG (150 aa)) folds into the Helicase C-terminal domain. Low complexity predominate over residues 832–975 (ANASTNATTN…ATTTESTNAS (144 aa)). The tract at residues 832–999 (ANASTNATTN…RFHPVTDINK (168 aa)) is disordered. Residues 976–999 (AKEDANKDGNAEDNRFHPVTDINK) show a composition bias toward basic and acidic residues.

This sequence belongs to the helicase family. Yeast subtelomeric Y' repeat subfamily.

Catalyzes DNA unwinding and is involved in telomerase-independent telomere maintenance. This Saccharomyces cerevisiae (strain ATCC 204508 / S288c) (Baker's yeast) protein is Y' element ATP-dependent helicase YLL066C.